The following is a 331-amino-acid chain: PHD finger protein 11 (331 aa).

The C2HC pre-PHD-type zinc-finger motif lies at 42-78; the sequence is KRTCALCPKDVEYNVLYFAQSENIAAHENCLLYSSGL. The segment at 108 to 160 adopts a PHD-type zinc-finger fold; it reads LKCKFCHKRGATVGCDLKNCNKNYHFFCAKKDDAVPQSDGVRGIYKLLCQQHA.

Interacts with BRCA1 and RELA. Highly expressed in T and B-cells, as well as natural killer and mature dendritic cells. Expressed at higher levels in Th1 as compared to Th2 cells. Expressed at low levels in all normal tissues tested, including lung, testis, small intestine, breast, liver and placenta.

It is found in the nucleus. Positive regulator of Th1-type cytokine gene expression. This Homo sapiens (Human) protein is PHD finger protein 11 (PHF11).